The following is a 152-amino-acid chain: SsrA-binding protein (152 aa).

Belongs to the SmpB family.

The protein resides in the cytoplasm. Required for rescue of stalled ribosomes mediated by trans-translation. Binds to transfer-messenger RNA (tmRNA), required for stable association of tmRNA with ribosomes. tmRNA and SmpB together mimic tRNA shape, replacing the anticodon stem-loop with SmpB. tmRNA is encoded by the ssrA gene; the 2 termini fold to resemble tRNA(Ala) and it encodes a 'tag peptide', a short internal open reading frame. During trans-translation Ala-aminoacylated tmRNA acts like a tRNA, entering the A-site of stalled ribosomes, displacing the stalled mRNA. The ribosome then switches to translate the ORF on the tmRNA; the nascent peptide is terminated with the 'tag peptide' encoded by the tmRNA and targeted for degradation. The ribosome is freed to recommence translation, which seems to be the essential function of trans-translation. This chain is SsrA-binding protein, found in Sulfurihydrogenibium sp. (strain YO3AOP1).